Here is a 529-residue protein sequence, read N- to C-terminus: Zinc finger protein 572 (529 aa).

Residues 1–125 (MEQEQKLLVS…TGPAGQQNPS (125 aa)) form a disordered region. Lysine 6 is covalently cross-linked (Glycyl lysine isopeptide (Lys-Gly) (interchain with G-Cter in SUMO2)). Residues 22–42 (KNTITGDESKNNLKTVQFSNS) are compositionally biased toward polar residues. Positions 43-68 (KADKERASKWSRSDGPENYKDEDTKE) are enriched in basic and acidic residues. Residues 87 to 96 (NDSNLGSQRN) show a composition bias toward polar residues. C2H2-type zinc fingers lie at residues 131–153 (YKCSECWKSFSNSSHLRIHQRTH), 159–181 (YRCSECGKCFSNSSHLIQHLRTH), 187–209 (YQCGECGKSFSNTSHLIIHERTH), 215–237 (YKCPECAKSLSSSSHLIQHHRSH), 243–265 (YECPLCGKCFSHSYVLVEHQRTH), 271–293 (YKCPDCGKSFSQSSSLIRHQRTH), 299–321 (YKCPECGKGFGCNSTLIKHQRIH), 327–349 (YQCIECGKNFSRSSNLVTHQKMH), 383–405 (YKCCECGKSFGLSSHLIRHQRTH), 411–433 (YRCSECWKTFSQSSTLVIHQRTH), 439–461 (YKCPDCGECFSQSFNLIRHRRTH), and 467–489 (YKCTDCEKCFSRSAYLSQHRKIH).

It belongs to the krueppel C2H2-type zinc-finger protein family.

Its subcellular location is the nucleus. Its function is as follows. May be involved in transcriptional regulation. The protein is Zinc finger protein 572 (ZNF572) of Bos taurus (Bovine).